Reading from the N-terminus, the 145-residue chain is Protein ImpA (145 aa).

Residues serine 64 and lysine 101 each act as for autocatalytic cleavage activity in the active site.

It belongs to the peptidase S24 family.

Its function is as follows. Involved in UV protection and mutation. This is Protein ImpA from Escherichia coli.